The chain runs to 734 residues: DNA-binding protein RFX2 (734 aa).

A compositionally biased stretch (polar residues) spans 1 to 23; the sequence is MQRSEGGSETPSTVALRTSTSAQ. Positions 1–31 are disordered; the sequence is MQRSEGGSETPSTVALRTSTSAQAPVVQPVP. Residues 204–279 constitute a DNA-binding region (RFX-type winged-helix); sequence HLQWLLDNYE…YHYYGIRLKP (76 aa). A disordered region spans residues 694 to 722; sequence DTSFSDDMTSDGDMSRMSERSLTEPAVKR. Residues 706–722 show a composition bias toward basic and acidic residues; it reads DMSRMSERSLTEPAVKR.

It belongs to the RFX family. Homodimer. Heterodimer; heterodimerizes with other rfx proteins.

It localises to the nucleus. The protein resides in the cytoplasm. In terms of biological role, transcription factor that acts as a key regulator of ciliogenesis. Specifically regulates expression of genes required for cilium assembly and function. Recognizes and binds the X-box, a regulatory motif with DNA sequence 5'-GTNRCC(0-3N)RGYAAC-3' present on promoters. The protein is DNA-binding protein RFX2 (rfx2) of Danio rerio (Zebrafish).